The sequence spans 510 residues: Lysine--tRNA ligase (510 aa).

Mg(2+)-binding residues include E420 and E427.

This sequence belongs to the class-II aminoacyl-tRNA synthetase family. Homodimer. The cofactor is Mg(2+).

The protein localises to the cytoplasm. The catalysed reaction is tRNA(Lys) + L-lysine + ATP = L-lysyl-tRNA(Lys) + AMP + diphosphate. The polypeptide is Lysine--tRNA ligase (Psychrobacter sp. (strain PRwf-1)).